Reading from the N-terminus, the 310-residue chain is Porphobilinogen deaminase (310 aa).

C242 carries the S-(dipyrrolylmethanemethyl)cysteine modification.

The protein belongs to the HMBS family. In terms of assembly, monomer. It depends on dipyrromethane as a cofactor.

It carries out the reaction 4 porphobilinogen + H2O = hydroxymethylbilane + 4 NH4(+). It participates in porphyrin-containing compound metabolism; protoporphyrin-IX biosynthesis; coproporphyrinogen-III from 5-aminolevulinate: step 2/4. Its function is as follows. Tetrapolymerization of the monopyrrole PBG into the hydroxymethylbilane pre-uroporphyrinogen in several discrete steps. This is Porphobilinogen deaminase from Shewanella oneidensis (strain ATCC 700550 / JCM 31522 / CIP 106686 / LMG 19005 / NCIMB 14063 / MR-1).